A 290-amino-acid polypeptide reads, in one-letter code: Light-independent protochlorophyllide reductase iron-sulfur ATP-binding protein (290 aa).

ATP-binding positions include 10–15 (GIGKST) and Lys-39. A Mg(2+)-binding site is contributed by Ser-14. The [4Fe-4S] cluster site is built by Cys-95 and Cys-129. Position 180–181 (180–181 (NR)) interacts with ATP.

It belongs to the NifH/BchL/ChlL family. In terms of assembly, homodimer. Protochlorophyllide reductase is composed of three subunits; ChlL, ChlN and ChlB. [4Fe-4S] cluster serves as cofactor.

Its subcellular location is the plastid. The protein resides in the chloroplast. It catalyses the reaction chlorophyllide a + oxidized 2[4Fe-4S]-[ferredoxin] + 2 ADP + 2 phosphate = protochlorophyllide a + reduced 2[4Fe-4S]-[ferredoxin] + 2 ATP + 2 H2O. Its pathway is porphyrin-containing compound metabolism; chlorophyll biosynthesis (light-independent). Component of the dark-operative protochlorophyllide reductase (DPOR) that uses Mg-ATP and reduced ferredoxin to reduce ring D of protochlorophyllide (Pchlide) to form chlorophyllide a (Chlide). This reaction is light-independent. The L component serves as a unique electron donor to the NB-component of the complex, and binds Mg-ATP. In Angiopteris evecta (Mule's foot fern), this protein is Light-independent protochlorophyllide reductase iron-sulfur ATP-binding protein.